We begin with the raw amino-acid sequence, 570 residues long: Putative ABC transporter ATP-binding protein SAR2766 (570 aa).

2 consecutive ABC transporter domains span residues 6–247 and 304–537; these read ISFK…GIRE and LELN…ASLR. Residues 40-47 and 338-345 contribute to the ATP site; these read GASGSGKS and GHNGAGKS.

Belongs to the ABC transporter superfamily.

Its subcellular location is the cell membrane. Probably part of an ABC transporter complex. Responsible for energy coupling to the transport system. The polypeptide is Putative ABC transporter ATP-binding protein SAR2766 (Staphylococcus aureus (strain MRSA252)).